The chain runs to 448 residues: Alginate biosynthesis transcriptional regulatory protein AlgB (448 aa).

The Response regulatory domain maps to 10–124; it reads RILLVDDESA…QLRLATAKQL (115 aa). Residue D59 is modified to 4-aspartylphosphate. Residues 147 to 376 enclose the Sigma-54 factor interaction domain; the sequence is LDSHSPAMMA…LRNVVERASI (230 aa). ATP-binding positions include 175-182 and 238-247; these read GESGTGKG and ADGGTLFLDE. The segment at residues 425 to 444 is a DNA-binding region (H-T-H motif); it reads LDQAAKTLGIDASTLYRKRK.

It functions in the pathway glycan biosynthesis; alginate biosynthesis [regulation]. In terms of biological role, positive regulator of the alginate biosynthetic gene algD. This Pseudomonas putida (strain ATCC 47054 / DSM 6125 / CFBP 8728 / NCIMB 11950 / KT2440) protein is Alginate biosynthesis transcriptional regulatory protein AlgB (algB).